A 277-amino-acid chain; its full sequence is MEMO1 family protein TM_0087 (277 aa).

Belongs to the MEMO1 family.

This Thermotoga maritima (strain ATCC 43589 / DSM 3109 / JCM 10099 / NBRC 100826 / MSB8) protein is MEMO1 family protein TM_0087.